Here is a 438-residue protein sequence, read N- to C-terminus: MADYQGKNVVIIGLGLTGLSCVDFFLARGVTPRVMDTRMTPPGLDKLPEAVERHTGGLNDEWLMAADLIVASPGIALAHPSLSAAADAGIEIVGDIELFCREAQAPIVAITGSNGKSTVTTLVGEMAKAAGVNVGVGGNIGLPALMLLDDECELYVLELSSFQLETTSSLQAVAATILNVTEDHMDRYPFGLQQYRAAKLRIYENAKVCVVNADDALTMPIRGADERCVSFGVNMGDYHLNHQQGETWLRVKGEKVLNVKEMKLSGQHNYTNALAALALADAAGLPRASSLKALTTFTGLPHRFEVVLEHNGVRWVNDSKATNVGSTEAALNGLHVDGTLHLLLGGDGKSADFSPLARYLNGDNVRLYCFGRDGAQLAALRPEVAEQTETMEQAMRLLATRVQPGDMVLLSPACASLDQFKNFEQRGNEFARLAKELG.

Position 112–118 (112–118 (GSNGKST)) interacts with ATP.

The protein belongs to the MurCDEF family.

Its subcellular location is the cytoplasm. It carries out the reaction UDP-N-acetyl-alpha-D-muramoyl-L-alanine + D-glutamate + ATP = UDP-N-acetyl-alpha-D-muramoyl-L-alanyl-D-glutamate + ADP + phosphate + H(+). The protein operates within cell wall biogenesis; peptidoglycan biosynthesis. Its function is as follows. Cell wall formation. Catalyzes the addition of glutamate to the nucleotide precursor UDP-N-acetylmuramoyl-L-alanine (UMA). This Escherichia coli O6:H1 (strain CFT073 / ATCC 700928 / UPEC) protein is UDP-N-acetylmuramoylalanine--D-glutamate ligase (murD).